The sequence spans 429 residues: Chaperone SurA (429 aa).

An N-terminal signal peptide occupies residues 1–18 (MFKRIALVCALFSGVCFA). PpiC domains lie at 170 to 271 (NLTY…KLVA) and 281 to 380 (ITQT…EVIA).

The protein localises to the periplasm. The catalysed reaction is [protein]-peptidylproline (omega=180) = [protein]-peptidylproline (omega=0). Its function is as follows. Chaperone involved in the correct folding and assembly of outer membrane proteins. Recognizes specific patterns of aromatic residues and the orientation of their side chains, which are found more frequently in integral outer membrane proteins. May act in both early periplasmic and late outer membrane-associated steps of protein maturation. This chain is Chaperone SurA, found in Legionella pneumophila (strain Lens).